The sequence spans 484 residues: Cysteine desulfurase, mitochondrial (484 aa).

The span at 29–42 (LATSASTSSSTTTS) shows a compositional bias: low complexity. The tract at residues 29–69 (LATSASTSSSTTTSNAETGELHVSTPLDSPSVHPPDGSSIS) is disordered. Residues 153–154 (AT), N233, Q261, and 281–283 (SSH) contribute to the pyridoxal 5'-phosphate site. Position 284 is an N6-(pyridoxal phosphate)lysine (K284). Residue T321 participates in pyridoxal 5'-phosphate binding. Residue C408 is the Cysteine persulfide intermediate of the active site. [2Fe-2S] cluster is bound at residue C408.

The protein belongs to the class-V pyridoxal-phosphate-dependent aminotransferase family. NifS/IscS subfamily. It depends on pyridoxal 5'-phosphate as a cofactor.

The protein resides in the mitochondrion. The enzyme catalyses (sulfur carrier)-H + L-cysteine = (sulfur carrier)-SH + L-alanine. Catalyzes the removal of elemental sulfur from cysteine to produce alanine. It supplies the inorganic sulfur for iron-sulfur (Fe-S) clusters. Plays a role in both tRNA-processing and mitochondrial metabolism. Involved in the 2-thio-modification of both 5-carboxymethylaminomethyl-2-thiouridine in mitochondrial tRNAs and 5-methoxycarbonylmethyl-2-thiouridine (mcm5s2U) in cytoplasmic tRNAs. The protein is Cysteine desulfurase, mitochondrial of Candida maltosa (Yeast).